Consider the following 616-residue polypeptide: Dihydroxy-acid dehydratase (616 aa).

Aspartate 81 serves as a coordination point for Mg(2+). [2Fe-2S] cluster is bound at residue cysteine 122. Mg(2+) contacts are provided by aspartate 123 and lysine 124. Lysine 124 carries the post-translational modification N6-carboxylysine. Residue cysteine 195 coordinates [2Fe-2S] cluster. Residue glutamate 491 participates in Mg(2+) binding. The active-site Proton acceptor is serine 517.

Belongs to the IlvD/Edd family. In terms of assembly, homodimer. Requires [2Fe-2S] cluster as cofactor. The cofactor is Mg(2+).

It carries out the reaction (2R)-2,3-dihydroxy-3-methylbutanoate = 3-methyl-2-oxobutanoate + H2O. It catalyses the reaction (2R,3R)-2,3-dihydroxy-3-methylpentanoate = (S)-3-methyl-2-oxopentanoate + H2O. Its pathway is amino-acid biosynthesis; L-isoleucine biosynthesis; L-isoleucine from 2-oxobutanoate: step 3/4. It functions in the pathway amino-acid biosynthesis; L-valine biosynthesis; L-valine from pyruvate: step 3/4. Functionally, functions in the biosynthesis of branched-chain amino acids. Catalyzes the dehydration of (2R,3R)-2,3-dihydroxy-3-methylpentanoate (2,3-dihydroxy-3-methylvalerate) into 2-oxo-3-methylpentanoate (2-oxo-3-methylvalerate) and of (2R)-2,3-dihydroxy-3-methylbutanoate (2,3-dihydroxyisovalerate) into 2-oxo-3-methylbutanoate (2-oxoisovalerate), the penultimate precursor to L-isoleucine and L-valine, respectively. This is Dihydroxy-acid dehydratase from Methylobacillus flagellatus (strain ATCC 51484 / DSM 6875 / VKM B-1610 / KT).